A 103-amino-acid polypeptide reads, in one-letter code: Small ribosomal subunit protein uS10 (103 aa).

The protein belongs to the universal ribosomal protein uS10 family. In terms of assembly, part of the 30S ribosomal subunit.

Functionally, involved in the binding of tRNA to the ribosomes. This is Small ribosomal subunit protein uS10 from Fusobacterium nucleatum subsp. nucleatum (strain ATCC 25586 / DSM 15643 / BCRC 10681 / CIP 101130 / JCM 8532 / KCTC 2640 / LMG 13131 / VPI 4355).